The primary structure comprises 810 residues: MVMAYFVENFWGEKNSGFDVLYHNMKHGQISTKELADFVRERATIEEAYSRSMTKLAKSASNYSQLGTFAPVWDVFKTSTEKLANCHLDLVRKLQELIKEVQKYGEEQVKSHKKTKEEVAGTLEAVQTIQSTTQALQKSKENYNAKCVEQERLKKEGATQREIEKAAVKSKKATDTYKLYVEKYALAKADFEQKMTETAQKFQDIEETHLIHIKEVIGSLSNAIKEIHLQIGQVHEEFINNMANTTVESLIQKFAESKGTGKERPGLIEFEECDTASAVEGIKPRKRKTFALPGIIKKEKDAESVECPDADSLNIPDVDEEGYSIKPETNQNDTKENHFYSSSDSDSEDEEPKKYRIEIKPMHPNNSHHTMASLDELRVSIGNITLSPAISRHSPVQMNRNLSNEELTKSKPSAPPNERGTSDLLAWDPLFGPSLDSSSSSSLTSSSSARPTTPLSVGTIVPPPRPASRPKLTSGKLSGINEIPRPFSPPVTSNTSPPPAAPLARAESSSSISSSASLSAANTPTVGVSRGPSPVSLGNQDTLPVAVALTESVNAYFKGADPTKCIVKITGDMTMSFPSGIIKVFTSNPTPAVLCFRVKNISRLEQILPNAQLVFSDPSQCDSNTKDFWMNMQAVTVYLKKLSEQNPAASYYNVDVLKYQVSSNGIQSTPLNLATYWKCSASTTDLRVDYKYNPEAMVAPSVLSNIQVVVPVDGGVMNMQSLPPAIWNAEQMKAFWKLSSISEKSENGGSGSLRAKFDLSEGPSKPTTLAVQFLSEGSTLSGVDFELVGTGYRLSLIKKRFATGRYLADC.

An F-BAR domain is found at 3–250 (MAYFVENFWG…NMANTTVESL (248 aa)). The mediates dimerization and binding to membranes enriched in Pi(4,5)-P2 and induces their tubulation stretch occupies residues 3–274 (MAYFVENFWG…PGLIEFEECD (272 aa)). A coiled-coil region spans residues 87–156 (HLDLVRKLQE…CVEQERLKKE (70 aa)). Lys297 participates in a covalent cross-link: Glycyl lysine isopeptide (Lys-Gly) (interchain with G-Cter in SUMO2). The interval 301–352 (DAESVECPDADSLNIPDVDEEGYSIKPETNQNDTKENHFYSSSDSDSEDEEP) is disordered. Ser312 carries the phosphoserine modification. Residue Thr385 is modified to Phosphothreonine. Phosphoserine is present on residues Ser387, Ser394, and Ser403. Positions 403-537 (SNEELTKSKP…VSRGPSPVSL (135 aa)) are disordered. Residues 433-456 (PSLDSSSSSSLTSSSSARPTTPLS) show a composition bias toward low complexity. Ser488, Ser493, Ser496, Ser508, Ser510, Ser511, and Ser533 each carry phosphoserine. Residues 502–521 (PLARAESSSSISSSASLSAA) show a composition bias toward low complexity. The tract at residues 521-810 (ANTPTVGVSR…FATGRYLADC (290 aa)) is mediates interaction with DAB2, EPS15, EPS15R and ITSN1. Residues 542–809 (TLPVAVALTE…RFATGRYLAD (268 aa)) enclose the MHD domain.

The protein belongs to the FCHO family. As to quaternary structure, homodimer; disulfide-linked. May form homotetramer. Interacts with AP2A1. Interacts with EPS15, EPS15R, ITSN1 and ITSN2; recruit those scaffolding proteins which in turn may interact with the adaptor protein complex AP-2 at the plasma membrane. Interacts with DAB2 (via DPF motifs); mediates LDL receptor/LDLR endocytosis. Post-translationally, ubiquitinated. Mainly undergoes monoubiquitination but also polyubiquitination.

It is found in the membrane. Its subcellular location is the clathrin-coated pit. Functions in an early step of clathrin-mediated endocytosis. Has both a membrane binding/bending activity and the ability to recruit proteins essential to the formation of functional clathrin-coated pits. Has a lipid-binding activity with a preference for membranes enriched in phosphatidylserine and phosphoinositides (Pi(4,5) biphosphate) like the plasma membrane. Its membrane-bending activity might be important for the subsequent action of clathrin and adaptors in the formation of clathrin-coated vesicles. Involved in adaptor protein complex AP-2-dependent endocytosis of the transferrin receptor, it also functions in the AP-2-independent endocytosis of the LDL receptor. This is F-BAR domain only protein 2 (FCHO2) from Pongo abelii (Sumatran orangutan).